Here is a 125-residue protein sequence, read N- to C-terminus: NADPH-dependent 7-cyano-7-deazaguanine reductase (125 aa).

The active-site Thioimide intermediate is the C41. D48 functions as the Proton donor in the catalytic mechanism. Substrate contacts are provided by residues 63–65 (VEL) and 82–83 (HE).

The protein belongs to the GTP cyclohydrolase I family. QueF type 1 subfamily.

The protein resides in the cytoplasm. The enzyme catalyses 7-aminomethyl-7-carbaguanine + 2 NADP(+) = 7-cyano-7-deazaguanine + 2 NADPH + 3 H(+). It participates in tRNA modification; tRNA-queuosine biosynthesis. In terms of biological role, catalyzes the NADPH-dependent reduction of 7-cyano-7-deazaguanine (preQ0) to 7-aminomethyl-7-deazaguanine (preQ1). The sequence is that of NADPH-dependent 7-cyano-7-deazaguanine reductase from Sulfurimonas denitrificans (strain ATCC 33889 / DSM 1251) (Thiomicrospira denitrificans (strain ATCC 33889 / DSM 1251)).